We begin with the raw amino-acid sequence, 217 residues long: MRLRKKWWARPEIEASDKFAEEPKELRGKWNKEFNNNNDIHLELGCGRGGFISQLVEKNKDINYVGIDLKDEVIVYAIRKVKEKEEEVKREFKNIRFVTMNIMGIAEVFDKNEISKIYINFCNPWPKEKHNKRRLTHTKLLTEYKKFLKPNTEIWFKTDDKELFEDSQEYFKESGFNIEYITYDLHNSDFKENIKTEYETKFETMGMKIMFLKARLL.

Positions 43, 68, 101, and 123 each coordinate S-adenosyl-L-methionine. Residue lysine 127 coordinates substrate. The interaction with RNA stretch occupies residues 129–134 (KHNKRR). Substrate contacts are provided by residues aspartate 159 and 196 to 199 (TEYE).

The protein belongs to the class I-like SAM-binding methyltransferase superfamily. TrmB family.

The catalysed reaction is guanosine(46) in tRNA + S-adenosyl-L-methionine = N(7)-methylguanosine(46) in tRNA + S-adenosyl-L-homocysteine. It functions in the pathway tRNA modification; N(7)-methylguanine-tRNA biosynthesis. Its function is as follows. Catalyzes the formation of N(7)-methylguanine at position 46 (m7G46) in tRNA. The chain is tRNA (guanine-N(7)-)-methyltransferase from Clostridium botulinum (strain Okra / Type B1).